The chain runs to 586 residues: Scavenger receptor cysteine-rich domain-containing group B protein (586 aa).

The disordered stretch occupies residues 1 to 33; it reads MGPSERPSIGWTPKEAEMQIGPQPDGWSRGWKP. Positions 1-58 are cleaved as a signal peptide; sequence MGPSERPSIGWTPKEAEMQIGPQPDGWSRGWKPGDRGAVPLPLSPALSFLLLFPLASA. 4 consecutive SRCR domains span residues 69 to 169, 200 to 300, 355 to 455, and 484 to 584; these read LRLV…VLCD, VRLV…VLCA, LRLV…ALCA, and LRLA…VLCQ. 12 cysteine pairs are disulfide-bonded: Cys-94-Cys-158, Cys-107-Cys-168, Cys-138-Cys-148, Cys-225-Cys-289, Cys-238-Cys-299, Cys-269-Cys-279, Cys-380-Cys-444, Cys-393-Cys-454, Cys-424-Cys-434, Cys-509-Cys-573, Cys-522-Cys-583, and Cys-553-Cys-563.

Its subcellular location is the secreted. This is Scavenger receptor cysteine-rich domain-containing group B protein from Mus musculus (Mouse).